Consider the following 385-residue polypeptide: Deoxyhypusine synthase (385 aa).

NAD(+) contacts are provided by residues 108 to 112, 134 to 136, Glu140, and Asp257; these read SNLIS and TAG. A spermidine-binding site is contributed by 139–140; it reads EE. Asp262 lines the spermidine pocket. Gly304 is an NAD(+) binding site. His309 is a spermidine binding site. Residue 329 to 330 participates in NAD(+) binding; the sequence is TG. Residues 335–337 and 344–350 contribute to the spermidine site; these read GSD and EAVSWGK. Lys350 functions as the Nucleophile in the catalytic mechanism. 363–364 contributes to the NAD(+) binding site; it reads DV.

The protein belongs to the deoxyhypusine synthase family. NAD(+) is required as a cofactor.

It carries out the reaction [eIF5A protein]-L-lysine + spermidine = [eIF5A protein]-deoxyhypusine + propane-1,3-diamine. The protein operates within protein modification; eIF5A hypusination. Catalyzes the NAD-dependent oxidative cleavage of spermidine and the subsequent transfer of the butylamine moiety of spermidine to the epsilon-amino group of a specific lysine residue of the eIF-5A precursor protein to form the intermediate deoxyhypusine residue. This is Deoxyhypusine synthase (DYS1) from Candida glabrata (strain ATCC 2001 / BCRC 20586 / JCM 3761 / NBRC 0622 / NRRL Y-65 / CBS 138) (Yeast).